A 175-amino-acid chain; its full sequence is Orotate phosphoribosyltransferase (175 aa).

5-phospho-alpha-D-ribose 1-diphosphate-binding positions include R89, K90, K93, and 115–123 (EDIATTGQS). Residues T119 and R147 each coordinate orotate.

Belongs to the purine/pyrimidine phosphoribosyltransferase family. PyrE subfamily. As to quaternary structure, homodimer. Requires Mg(2+) as cofactor.

It catalyses the reaction orotidine 5'-phosphate + diphosphate = orotate + 5-phospho-alpha-D-ribose 1-diphosphate. It participates in pyrimidine metabolism; UMP biosynthesis via de novo pathway; UMP from orotate: step 1/2. Its function is as follows. Catalyzes the transfer of a ribosyl phosphate group from 5-phosphoribose 1-diphosphate to orotate, leading to the formation of orotidine monophosphate (OMP). This Halobacterium salinarum (strain ATCC 700922 / JCM 11081 / NRC-1) (Halobacterium halobium) protein is Orotate phosphoribosyltransferase.